Reading from the N-terminus, the 50-residue chain is Defensin D2 (50 aa).

Cystine bridges form between Cys-3–Cys-50, Cys-14–Cys-35, Cys-20–Cys-44, and Cys-24–Cys-46.

Contains 4 disulfide bonds.

It localises to the secreted. In terms of biological role, antimicrobial peptide active against fungi, Gram-positive and Gram-negative bacteria. Inhibits growth of hyphae in the fungi A.niger (IC(50)=3.5 ug/ml), B.sorokiniana (IC(50)=1.8 ug/ml), F.oxysporum (IC(50)=5.3 ug/ml), F.graminearum (IC(50)=6.9 ug/ml), F.culmorum (IC(50)=6.9 ug/ml) and B.cinerea (IC(50)=13.7 ug/ml). Has no effect on spore germination. Destroys spores in germinated conidia by disruption of cell walls and membranes in A.niger and B.sorokiniana. Causes vacuolization of germinated macro- and microconidia in F.oxysporum, F.graminearum and F.culmorum. Strongly inhibits growth of P.infestans on potato tubers above concentrations of 3.4 ug/ml. Inhibits growth of Gram-positive bacteria C.michiganensis and B.subtilis and of Gram-negative bacteria P.syringae, E.carotovora and E.coli. In Nigella sativa (Black cumin), this protein is Defensin D2.